The chain runs to 205 residues: Large ribosomal subunit protein uL3c (205 aa).

The interval 127-153 (HFSRGPMSHGSKNHRQPGSIGAGTTPG) is disordered.

This sequence belongs to the universal ribosomal protein uL3 family. As to quaternary structure, part of the 50S ribosomal subunit.

The protein localises to the plastid. Its subcellular location is the chloroplast. Its function is as follows. One of the primary rRNA binding proteins, it binds directly near the 3'-end of the 23S rRNA, where it nucleates assembly of the 50S subunit. The polypeptide is Large ribosomal subunit protein uL3c (rpl3) (Porphyra purpurea (Red seaweed)).